The following is a 51-amino-acid chain: Insulin (51 aa).

3 disulfides stabilise this stretch: Cys-7–Cys-37, Cys-19–Cys-50, and Cys-36–Cys-41.

This sequence belongs to the insulin family. In terms of assembly, heterodimer of a B chain and an A chain linked by two disulfide bonds.

It localises to the secreted. Functionally, insulin decreases blood glucose concentration. It increases cell permeability to monosaccharides, amino acids and fatty acids. It accelerates glycolysis, the pentose phosphate cycle, and glycogen synthesis in liver. The polypeptide is Insulin (INS) (Acomys cahirinus (Cairo spiny mouse)).